Here is a 154-residue protein sequence, read N- to C-terminus: 20 kDa calcium-binding protein (154 aa).

4 consecutive EF-hand domains span residues 13 to 48, 49 to 84, 86 to 121, and 122 to 154; these read DQVK…LNLT, VKPD…KLQE, QDER…LGDD, and LTEE…MTSE. The Ca(2+) site is built by Asp62, Asp64, Thr66, Asp99, Asn101, Glu105, Asp110, Asp135, Asp137, Ser139, and Glu146.

It localises to the tegument membrane. Calcium-binding protein. The chain is 20 kDa calcium-binding protein (SM20) from Schistosoma mansoni (Blood fluke).